Here is a 489-residue protein sequence, read N- to C-terminus: MRTDQVPNTTSEHPAIDLSRVHLIGIGGAGMSGVARILLARGKTVTGSDAKDSRTLLPLRAVGAKIAVGHAAENLELAGELPTVVVTSFAAIPQDNPELVRAREENIPVIRRSDLLGELLEGHRQVLIAGTHGKTSTTSMAVVALQAAGMDPSFAIGGQLNKAGTNAHQGTGEAFVAEADESDASLLRYTPEIAVVTNIEPDHLDFFKTPEAYFQVFEDFADRLTPGGTLVVCLDDPGAAALGERAVARGINAVGYGTVDAVAAHPTVPVKATILSSRVVAEGTYAVLDIDGREVEIILQIPGNHMVLNGAAALLSGYLLGADLDKLAAGLSDFSGVRRRFEYHGTVRGGQFDGASVYDDYAHHPTEVEAVLKAARERVDAAGEGRVIVAFQPHLYSRTLEFAREFAGALSLADAAVLLEIFGAREKPVEGVTSRVITDEMTIPVSYEPNFSAVPDRIAEIAGPADIVLTMGAGSVTMLAPEILDRLRG.

130-136 (GTHGKTS) contributes to the ATP binding site.

This sequence belongs to the MurCDEF family.

Its subcellular location is the cytoplasm. It carries out the reaction UDP-N-acetyl-alpha-D-muramate + L-alanine + ATP = UDP-N-acetyl-alpha-D-muramoyl-L-alanine + ADP + phosphate + H(+). The protein operates within cell wall biogenesis; peptidoglycan biosynthesis. Its function is as follows. Cell wall formation. The protein is UDP-N-acetylmuramate--L-alanine ligase of Corynebacterium efficiens (strain DSM 44549 / YS-314 / AJ 12310 / JCM 11189 / NBRC 100395).